The sequence spans 43 residues: Protein PsbN (43 aa).

The chain crosses the membrane as a helical span at residues 5–27; the sequence is TLVAISISGLLVSFTGYALYTAF.

This sequence belongs to the PsbN family.

It is found in the plastid. The protein localises to the chloroplast thylakoid membrane. In terms of biological role, may play a role in photosystem I and II biogenesis. The chain is Protein PsbN from Eucalyptus globulus subsp. globulus (Tasmanian blue gum).